A 157-amino-acid chain; its full sequence is 2-C-methyl-D-erythritol 2,4-cyclodiphosphate synthase (157 aa).

D8, H10, and H42 together coordinate a divalent metal cation. Position 8–10 (8–10 (DVH)) interacts with 4-CDP-2-C-methyl-D-erythritol 2-phosphate. 4-CDP-2-C-methyl-D-erythritol 2-phosphate is bound by residues 56–58 (DIG), 132–135 (STSE), F139, and R142.

Belongs to the IspF family. In terms of assembly, homotrimer. A divalent metal cation serves as cofactor.

It carries out the reaction 4-CDP-2-C-methyl-D-erythritol 2-phosphate = 2-C-methyl-D-erythritol 2,4-cyclic diphosphate + CMP. It functions in the pathway isoprenoid biosynthesis; isopentenyl diphosphate biosynthesis via DXP pathway; isopentenyl diphosphate from 1-deoxy-D-xylulose 5-phosphate: step 4/6. Involved in the biosynthesis of isopentenyl diphosphate (IPP) and dimethylallyl diphosphate (DMAPP), two major building blocks of isoprenoid compounds. Catalyzes the conversion of 4-diphosphocytidyl-2-C-methyl-D-erythritol 2-phosphate (CDP-ME2P) to 2-C-methyl-D-erythritol 2,4-cyclodiphosphate (ME-CPP) with a corresponding release of cytidine 5-monophosphate (CMP). In Dehalococcoides mccartyi (strain ATCC BAA-2266 / KCTC 15142 / 195) (Dehalococcoides ethenogenes (strain 195)), this protein is 2-C-methyl-D-erythritol 2,4-cyclodiphosphate synthase.